We begin with the raw amino-acid sequence, 316 residues long: Pantothenate kinase (316 aa).

Position 95–102 (95–102 (GSVAVGKS)) interacts with ATP.

It belongs to the prokaryotic pantothenate kinase family.

The protein localises to the cytoplasm. It catalyses the reaction (R)-pantothenate + ATP = (R)-4'-phosphopantothenate + ADP + H(+). Its pathway is cofactor biosynthesis; coenzyme A biosynthesis; CoA from (R)-pantothenate: step 1/5. This is Pantothenate kinase from Yersinia pseudotuberculosis serotype O:3 (strain YPIII).